Reading from the N-terminus, the 260-residue chain is Cytosolic Fe-S cluster assembly factor Nubp2 homolog (260 aa).

14 to 21 (GKGGVGKS) serves as a coordination point for ATP. 2 residues coordinate [4Fe-4S] cluster: C188 and C191.

The protein belongs to the Mrp/NBP35 ATP-binding proteins family. NUBP2/CFD1 subfamily. Heterotetramer of 2 Nubp1 and 2 Nubp2 chains. [4Fe-4S] cluster serves as cofactor.

The protein localises to the cytoplasm. Its function is as follows. Component of the cytosolic iron-sulfur (Fe/S) protein assembly (CIA) machinery. Required for maturation of extramitochondrial Fe-S proteins. The Nubp1-Nubp2 heterotetramer forms a Fe-S scaffold complex, mediating the de novo assembly of an Fe-S cluster and its transfer to target apoproteins. In Drosophila melanogaster (Fruit fly), this protein is Cytosolic Fe-S cluster assembly factor Nubp2 homolog.